Reading from the N-terminus, the 539-residue chain is Phosphoenolpyruvate carboxykinase (ATP) (539 aa).

Substrate is bound by residues R64, Y206, and K212. ATP contacts are provided by residues K212, H231, and G247–T255. The Mn(2+) site is built by K212 and H231. Residue D268 participates in Mn(2+) binding. Residues E296, R332, R448 to I449, and T454 each bind ATP. A substrate-binding site is contributed by R332.

It belongs to the phosphoenolpyruvate carboxykinase (ATP) family. Monomer. It depends on Mn(2+) as a cofactor.

Its subcellular location is the cytoplasm. The catalysed reaction is oxaloacetate + ATP = phosphoenolpyruvate + ADP + CO2. The protein operates within carbohydrate biosynthesis; gluconeogenesis. In terms of biological role, involved in the gluconeogenesis. Catalyzes the conversion of oxaloacetate (OAA) to phosphoenolpyruvate (PEP) through direct phosphoryl transfer between the nucleoside triphosphate and OAA. This is Phosphoenolpyruvate carboxykinase (ATP) from Salmonella gallinarum (strain 287/91 / NCTC 13346).